The sequence spans 613 residues: Chaperone protein DnaK (613 aa).

Position 173 is a phosphothreonine; by autocatalysis (T173). The interval 577–613 is disordered; it reads AKQAQAQQEGGAEGAQKADDNVVDAEYEEVNDDQEKK. The span at 597–613 shows a compositional bias: acidic residues; it reads NVVDAEYEEVNDDQEKK.

The protein belongs to the heat shock protein 70 family.

Functionally, acts as a chaperone. The chain is Chaperone protein DnaK from Bacillus pumilus (strain SAFR-032).